The sequence spans 163 residues: Meiotically up-regulated gene 109 protein (163 aa).

Transmembrane regions (helical) follow at residues 61–78 (YRFY…FFIW), 82–104 (ALLA…SLTI), 114–134 (YSIP…APVG), and 136–156 (LFWS…LTTY).

Its subcellular location is the membrane. In terms of biological role, has a role in meiosis. The chain is Meiotically up-regulated gene 109 protein (mug109) from Schizosaccharomyces pombe (strain 972 / ATCC 24843) (Fission yeast).